The following is a 266-amino-acid chain: uncharacterized protein (266 aa).

An N-terminal signal peptide occupies residues Met1 to Gly22. Cys23 carries N-palmitoyl cysteine lipidation. Cys23 carries the S-diacylglycerol cysteine lipid modification.

This sequence belongs to the staphylococcal tandem lipoprotein family.

The protein resides in the cell membrane. This is an uncharacterized protein from Staphylococcus aureus (strain N315).